The following is a 620-amino-acid chain: Glutathione-regulated potassium-efflux system protein KefC (620 aa).

Helical transmembrane passes span 4–24, 26–46, 54–74, 86–106, 114–134, 149–169, 178–198, 218–238, 271–291, 296–316, 326–346, and 359–379; these read HTLI…PVAV, LGLG…PWGL, AILH…GLEL, VFGG…GFCV, VALL…MQAM, FAVL…IPLL, ASAF…VVLL, VFSA…EEAG, LLLG…TLVA, VLTL…LVAK, RWFA…FGAA, and ALTL…VLLT. One can recognise an RCK N-terminal domain in the interval 399-518; the sequence is QPRVIIAGFG…AGVAQPERET (120 aa). The interval 596–620 is disordered; sequence HGWQGTREGKHTGNDADEPEVKPQP.

Belongs to the monovalent cation:proton antiporter 2 (CPA2) transporter (TC 2.A.37) family. KefC subfamily. In terms of assembly, homodimer. Interacts with the regulatory subunit KefF.

It is found in the cell inner membrane. Its function is as follows. Pore-forming subunit of a potassium efflux system that confers protection against electrophiles. Catalyzes K(+)/H(+) antiport. The chain is Glutathione-regulated potassium-efflux system protein KefC from Cronobacter sakazakii (strain ATCC BAA-894) (Enterobacter sakazakii).